Reading from the N-terminus, the 185-residue chain is NADH-quinone oxidoreductase subunit B (185 aa).

[4Fe-4S] cluster is bound by residues Cys-38, Cys-39, Cys-104, and Cys-133.

This sequence belongs to the complex I 20 kDa subunit family. In terms of assembly, NDH-1 is composed of 14 different subunits. Subunits NuoB, C, D, E, F, and G constitute the peripheral sector of the complex. [4Fe-4S] cluster is required as a cofactor.

It localises to the cell membrane. It carries out the reaction a quinone + NADH + 5 H(+)(in) = a quinol + NAD(+) + 4 H(+)(out). NDH-1 shuttles electrons from NADH, via FMN and iron-sulfur (Fe-S) centers, to quinones in the respiratory chain. The immediate electron acceptor for the enzyme in this species is believed to be a menaquinone. Couples the redox reaction to proton translocation (for every two electrons transferred, four hydrogen ions are translocated across the cytoplasmic membrane), and thus conserves the redox energy in a proton gradient. The polypeptide is NADH-quinone oxidoreductase subunit B (Cutibacterium acnes (strain DSM 16379 / KPA171202) (Propionibacterium acnes)).